The chain runs to 338 residues: Heat-inducible transcription repressor HrcA (338 aa).

This sequence belongs to the HrcA family.

In terms of biological role, negative regulator of class I heat shock genes (grpE-dnaK-dnaJ and groELS operons). Prevents heat-shock induction of these operons. The chain is Heat-inducible transcription repressor HrcA from Bacillus mycoides (strain KBAB4) (Bacillus weihenstephanensis).